The following is a 152-amino-acid chain: Large ribosomal subunit protein uL15 (152 aa).

Residues Met-1–Pro-56 are disordered. The segment covering Arg-21–Ser-31 has biased composition (gly residues). The segment covering Arg-33–Tyr-44 has biased composition (basic residues).

The protein belongs to the universal ribosomal protein uL15 family. Part of the 50S ribosomal subunit.

Functionally, binds to the 23S rRNA. This Amoebophilus asiaticus (strain 5a2) protein is Large ribosomal subunit protein uL15.